The following is a 329-amino-acid chain: Phenylalanine--tRNA ligase alpha subunit (329 aa).

Residue Glu-254 participates in Mg(2+) binding.

It belongs to the class-II aminoacyl-tRNA synthetase family. Phe-tRNA synthetase alpha subunit type 1 subfamily. In terms of assembly, tetramer of two alpha and two beta subunits. Requires Mg(2+) as cofactor.

Its subcellular location is the cytoplasm. The enzyme catalyses tRNA(Phe) + L-phenylalanine + ATP = L-phenylalanyl-tRNA(Phe) + AMP + diphosphate + H(+). This is Phenylalanine--tRNA ligase alpha subunit from Histophilus somni (strain 2336) (Haemophilus somnus).